We begin with the raw amino-acid sequence, 131 residues long: Holo-[acyl-carrier-protein] synthase (131 aa).

Mg(2+)-binding residues include D8 and E57.

This sequence belongs to the P-Pant transferase superfamily. AcpS family. It depends on Mg(2+) as a cofactor.

It is found in the cytoplasm. The enzyme catalyses apo-[ACP] + CoA = holo-[ACP] + adenosine 3',5'-bisphosphate + H(+). Its function is as follows. Transfers the 4'-phosphopantetheine moiety from coenzyme A to a Ser of acyl-carrier-protein. This Thiobacillus denitrificans (strain ATCC 25259 / T1) protein is Holo-[acyl-carrier-protein] synthase.